The primary structure comprises 421 residues: Tol-Pal system protein TolB (421 aa).

The first 16 residues, 1–16, serve as a signal peptide directing secretion; sequence MRILVFLWLGLSSLFA.

This sequence belongs to the TolB family. As to quaternary structure, the Tol-Pal system is composed of five core proteins: the inner membrane proteins TolA, TolQ and TolR, the periplasmic protein TolB and the outer membrane protein Pal. They form a network linking the inner and outer membranes and the peptidoglycan layer.

It is found in the periplasm. Functionally, part of the Tol-Pal system, which plays a role in outer membrane invagination during cell division and is important for maintaining outer membrane integrity. This chain is Tol-Pal system protein TolB, found in Wolinella succinogenes (strain ATCC 29543 / DSM 1740 / CCUG 13145 / JCM 31913 / LMG 7466 / NCTC 11488 / FDC 602W) (Vibrio succinogenes).